Consider the following 89-residue polypeptide: Toxin To14 (89 aa).

The first 19 residues, 1–19, serve as a signal peptide directing secretion; the sequence is MNCLMLIFVVFLLAFGVEC. Residues 21–85 form the LCN-type CS-alpha/beta domain; the sequence is KDDYPVDTAK…SPTKTSGRCN (65 aa). Disulfide bonds link C33–C84, C37–C60, C46–C67, and C50–C69.

As to expression, expressed by the venom gland.

It localises to the secreted. Its function is as follows. Inhibits voltage-gated sodium channels (Nav). The polypeptide is Toxin To14 (Tityus obscurus (Amazonian scorpion)).